The primary structure comprises 570 residues: Mitoguardin 1 (570 aa).

The chain crosses the membrane as a helical span at residues Gly-34–Cys-54.

This sequence belongs to the mitoguardin family. As to quaternary structure, homodimer and heterodimer; forms heterodimers with miga2.

The protein localises to the mitochondrion outer membrane. Its function is as follows. Regulator of mitochondrial fusion: acts by forming homo- and heterodimers at the mitochondrial outer membrane and facilitating the formation of pld6/MitoPLD dimers. May act by regulating phospholipid metabolism via pld6/MitoPLD. This Xenopus laevis (African clawed frog) protein is Mitoguardin 1.